The following is a 100-amino-acid chain: uncharacterized protein (100 aa).

This is an uncharacterized protein from Bacillus anthracis.